The following is an 856-amino-acid chain: Valine--tRNA ligase (856 aa).

Residues proline 47–histidine 57 carry the 'HIGH' region motif. Residues lysine 578–serine 582 carry the 'KMSKS' region motif. ATP is bound at residue lysine 581.

Belongs to the class-I aminoacyl-tRNA synthetase family. ValS type 2 subfamily. Monomer.

Its subcellular location is the cytoplasm. The catalysed reaction is tRNA(Val) + L-valine + ATP = L-valyl-tRNA(Val) + AMP + diphosphate. Its function is as follows. Catalyzes the attachment of valine to tRNA(Val). As ValRS can inadvertently accommodate and process structurally similar amino acids such as threonine, to avoid such errors, it has a 'posttransfer' editing activity that hydrolyzes mischarged Thr-tRNA(Val) in a tRNA-dependent manner. This chain is Valine--tRNA ligase, found in Tropheryma whipplei (strain TW08/27) (Whipple's bacillus).